The chain runs to 271 residues: Extracellular metalloprotease ARB_05317 (271 aa).

The first 19 residues, 1–19 (MRFSVLLTGLAAAGSIATA), serve as a signal peptide directing secretion. A glycan (N-linked (GlcNAc...) asparagine) is linked at Asn136. His185 serves as a coordination point for Zn(2+). Residue Glu186 is part of the active site. His189 serves as a coordination point for Zn(2+). N-linked (GlcNAc...) asparagine glycosylation is present at Asn200. Residues Cys222 and Cys248 are joined by a disulfide bond.

Belongs to the peptidase M43B family.

The protein localises to the secreted. In terms of biological role, secreted metalloproteinase that allows assimilation of proteinaceous substrates. Plays a pivotal role as a pathogenicity determinant during infections and contributes to the ability of the pathogen to persist within the mammalian host. This Arthroderma benhamiae (strain ATCC MYA-4681 / CBS 112371) (Trichophyton mentagrophytes) protein is Extracellular metalloprotease ARB_05317.